The chain runs to 390 residues: O-glycoside alpha-1,2-mannosyltransferase omh1 (390 aa).

The active-site Nucleophile is the Glu-279.

Belongs to the glycosyltransferase 15 family.

It is found in the endoplasmic reticulum. Its subcellular location is the golgi apparatus. Its function is as follows. Mannosyltransferase involved in O-glycosylation of cell wall and secreted proteins. Plays a major role in extending alpha-1,2-linked mannose in the O-glycan pathway. The sequence is that of O-glycoside alpha-1,2-mannosyltransferase omh1 (omh1) from Schizosaccharomyces pombe (strain 972 / ATCC 24843) (Fission yeast).